We begin with the raw amino-acid sequence, 339 residues long: MVREEVAGSTQTLQWKCVESRVDSKRLYYGRFILSPLRKGQADTVGIALRRALLGEIEGTCITRAKFGSVPHEYSTIAGIEESVQEILLNLKEIVLRSNLYGVRDASICVKGPRYITAQDIILPPSVEIVDTAQPIANLTEPIDFCIDLQIKRDRGYQTELRKNYQDGSYPIDAVXMPVRNVNYSIFSCGNGNEKHEILFLEIWTNGSLTPKEALYEASRNLIDLFLPFLHAEEEGTSFEENKNRFTPPLFTFQKRLTNLKKNKKGIPLNCIFIDQLELTSRTYNCLKRANIHTLLDLLSKTEEDLLRIDSFRMEDRKHIWDTLEKHLPIDLLKNKLSF.

Residues 1–233 (MVREEVAGST…DLFLPFLHAE (233 aa)) form an alpha N-terminal domain (alpha-NTD) region. Positions 264–339 (KKGIPLNCIF…IDLLKNKLSF (76 aa)) are alpha C-terminal domain (alpha-CTD).

This sequence belongs to the RNA polymerase alpha chain family. In terms of assembly, in plastids the minimal PEP RNA polymerase catalytic core is composed of four subunits: alpha, beta, beta', and beta''. When a (nuclear-encoded) sigma factor is associated with the core the holoenzyme is formed, which can initiate transcription.

The protein resides in the plastid. Its subcellular location is the chloroplast. It catalyses the reaction RNA(n) + a ribonucleoside 5'-triphosphate = RNA(n+1) + diphosphate. DNA-dependent RNA polymerase catalyzes the transcription of DNA into RNA using the four ribonucleoside triphosphates as substrates. This Australopyrum velutinum (Mountain wheat-grass) protein is DNA-directed RNA polymerase subunit alpha.